Consider the following 169-residue polypeptide: Type II secretion system protein H (169 aa).

A propeptide spans 1–29 (MRVARLPLLHPHRAAPVVRRQLRGSSLLE) (leader sequence). Methionine 30 is modified (N-methylmethionine). The helical transmembrane segment at 32–52 (LVIALIALAGVLAAAALTGGI) threads the bilayer.

The protein belongs to the GSP H family. In terms of assembly, type II secretion is composed of four main components: the outer membrane complex, the inner membrane complex, the cytoplasmic secretion ATPase and the periplasm-spanning pseudopilus. Interacts with core component XpsG. Interacts with minor pseudopilins XpsI and XpsJ. Post-translationally, cleaved by prepilin peptidase. In terms of processing, methylated by prepilin peptidase at the amino group of the N-terminal phenylalanine once the leader sequence is cleaved by prepilin peptidase.

It localises to the cell inner membrane. Component of the type II secretion system required for the energy-dependent secretion of extracellular factors such as proteases and toxins from the periplasm. Part of the pseudopilus tip complex that is critical for the recognition and binding of secretion substrates. In Xanthomonas campestris pv. campestris (strain ATCC 33913 / DSM 3586 / NCPPB 528 / LMG 568 / P 25), this protein is Type II secretion system protein H (xpsH).